An 88-amino-acid polypeptide reads, in one-letter code: HssA/B-like protein 19 (88 aa).

Belongs to the hssA/B family.

In Dictyostelium discoideum (Social amoeba), this protein is HssA/B-like protein 19 (hssl19).